A 695-amino-acid chain; its full sequence is Probable pre-mRNA-splicing factor ATP-dependent RNA helicase DEAH9 (695 aa).

In terms of domain architecture, Helicase ATP-binding spans 58–223 (LYLVENHATT…FNSSKKRHAP (166 aa)). Position 71 to 78 (71 to 78 (GETGSGKT)) interacts with ATP. The short motif at 170–173 (DEAH) is the DEAH box element. One can recognise a Helicase C-terminal domain in the interval 261-438 (SVVSTILLIN…STVIQLKALG (178 aa)).

Belongs to the DEAD box helicase family. DEAH subfamily. DDX35 sub-subfamily.

The enzyme catalyses ATP + H2O = ADP + phosphate + H(+). Functionally, may be involved in pre-mRNA splicing. This chain is Probable pre-mRNA-splicing factor ATP-dependent RNA helicase DEAH9, found in Arabidopsis thaliana (Mouse-ear cress).